The sequence spans 324 residues: NADH-ubiquinone oxidoreductase chain 1 (324 aa).

8 helical membrane-spanning segments follow: residues 9–29 (LINPLAYIVPVLLAVAFLTLI), 75–95 (FLFLAAPVLALTLAMTLWAPM), 106–126 (LGILFILALSSLAVYSILGSG), 146–166 (ISYEVSLGLILLSVIIFSGGY), 177–197 (SIWLLIPAWPLAAMWYISTLA), 228–248 (LFFLAEYANILLMNTLSAVLF), 259–279 (ELTTINLMTKAALLSIMFLWV), and 299–319 (FLPLTLAFVLWHTALPIALAG).

Belongs to the complex I subunit 1 family.

It localises to the mitochondrion inner membrane. The catalysed reaction is a ubiquinone + NADH + 5 H(+)(in) = a ubiquinol + NAD(+) + 4 H(+)(out). In terms of biological role, core subunit of the mitochondrial membrane respiratory chain NADH dehydrogenase (Complex I) that is believed to belong to the minimal assembly required for catalysis. Complex I functions in the transfer of electrons from NADH to the respiratory chain. The immediate electron acceptor for the enzyme is believed to be ubiquinone. In Cyprinus carpio (Common carp), this protein is NADH-ubiquinone oxidoreductase chain 1 (MT-ND1).